The sequence spans 249 residues: Cysteine desulfuration protein SufE (249 aa).

The active-site Cysteine persulfide intermediate is the Cys154.

Belongs to the SufE family. As to quaternary structure, monomer. Interacts with SufS; interaction enhances cysteine desulfurase activity of SufS. Post-translationally, proteolytically cleaved.

The protein localises to the plastid. The protein resides in the apicoplast. Its pathway is cofactor biosynthesis; iron-sulfur cluster biosynthesis. In terms of biological role, participates in sulfur mobilization (SUF) pathway for iron-sulfur (Fe-S) cluster biogenesis. Enhances cysteine desulfurase activity of SufS. Probably functions as a sulfur acceptor for SufS. In Plasmodium falciparum (isolate 3D7), this protein is Cysteine desulfuration protein SufE.